The chain runs to 450 residues: Protein tweety homolog 1 (450 aa).

The Extracellular segment spans residues 1-43; it reads MGAPPGYRPSAWVHLLHQLPRADFQLRPVPSGFAPRDQEYQQA. A helical membrane pass occupies residues 44-64; it reads LLLVAALAGLGLGLSLIFIAV. Residues 65–88 are Cytoplasmic-facing; that stretch reads YLIRFCCCRPPEPHGAKSPPPGGG. Residues 89 to 109 traverse the membrane as a helical segment; it reads CVTWSCIAALLVGCAGIGIGF. The Extracellular segment spans residues 110–214; that stretch reads YGNSETSDGV…DVTFVEEYRW (105 aa). Asn-130 carries an N-linked (GlcNAc...) asparagine glycan. Residues 215–235 traverse the membrane as a helical segment; sequence LAYVLLLLLVLLVCLFTLLGL. Over 236 to 240 the chain is Cytoplasmic; that stretch reads AKQSK. A helical membrane pass occupies residues 241–261; it reads WLVVVMTAMSLLVLVLSWGSM. The Extracellular segment spans residues 262 to 390; sequence GLEAATAVGL…LRGLCEDALE (129 aa). Disulfide bonds link Cys-275-Cys-385 and Cys-303-Cys-370. 2 N-linked (GlcNAc...) asparagine glycosylation sites follow: Asn-284 and Asn-355. Residues 391 to 411 form a helical membrane-spanning segment; the sequence is GLLFLMLFSLLSAGALATTLC. Topologically, residues 412–450 are cytoplasmic; that stretch reads SLPRAWALFPPSDDYDDTDDDDPFNPQESKRFVQWQSSI. Residues 428–450 form a disordered region; it reads DTDDDDPFNPQESKRFVQWQSSI. Ser-440 bears the Phosphoserine mark.

Belongs to the tweety family. In terms of assembly, homotetramer; disulfide-linked. Homodimer. Post-translationally, N-glycosylated. Contains high-mannose, hybrid and complex oligosaccharides. As to expression, expressed in the astrocytes (at protein level). Restricted mainly to neural tissues. Strongly expressed in brain and eye.

It is found in the cell membrane. It carries out the reaction chloride(in) = chloride(out). The catalysed reaction is L-glutamate(out) = L-glutamate(in). Inhibited by (4-[(2-butyl-6,7-dichloro-2- cyclopentyl-2,3-dihydro-1-oxo-1H-inden-5-yl)oxy]butanoic acid). In terms of biological role, calcium-independent, swelling-dependent volume-regulated anion channel (VRAC-swell) which plays a pivotal role in the process of regulatory volume decrease (RVD) in the brain through the efflux of anions like chloride and organic osmolytes like glutamate. This is Protein tweety homolog 1 (Ttyh1) from Mus musculus (Mouse).